The primary structure comprises 220 residues: Small ribosomal subunit protein uS5 (220 aa).

The tract at residues 1 to 39 (MAEQPAGQAGTTDNRDARGDREGRRRDSGRGSRERDGEK) is disordered. The span at 13 to 39 (DNRDARGDREGRRRDSGRGSRERDGEK) shows a compositional bias: basic and acidic residues. In terms of domain architecture, S5 DRBM spans 42 to 105 (YLERVVAINR…EEARKSFFRV (64 aa)).

It belongs to the universal ribosomal protein uS5 family. In terms of assembly, part of the 30S ribosomal subunit. Contacts proteins S4 and S8.

In terms of biological role, with S4 and S12 plays an important role in translational accuracy. Functionally, located at the back of the 30S subunit body where it stabilizes the conformation of the head with respect to the body. The sequence is that of Small ribosomal subunit protein uS5 from Mycobacterium bovis (strain ATCC BAA-935 / AF2122/97).